A 2153-amino-acid polypeptide reads, in one-letter code: MEKYREIHQRVRDLAPGTVSALECIDLLDRLYAVRHDLVDQMIKHDWSDNKDVERPIGQVLLMAGIPNDIIQGMEKKIIPNSPSGQVLKSFFRMTPDNYKITGNLIEFIEVTVTADVSRGIREKKIKYEGGLQFVEHLLETESRKGNIPQPYKITFSVVAVKTDGSNISTQWPSRRNDGVVQHMRLVQADINYVREHLIKLDERASLEAMFNLKFHVSGPKLRYFNIPDYRPQQLCEPRIDNLIQYCKNWLTKEHKFVFKEVSGANVIQAFESHEQLHLQKYNESRKPRNFLLLQLTVQGAYLPSTISSDQCNTRIGCLEISKNQPETPVQMLALDISYKYLSLTRDELINYYSPRVHFQSSPNVKEPGTLKLGLSQLNPLSKSILDNVGKHKKDKGLFGEIIDSINVASQIQINACAKIIEQILSNLEINIGEINASMPSPNKTTGVDDLLNKFYDNELGKYMLSILRKTAAWHIGHLVRDITESLIAHAGLRRSKYWSVHAYDHGNVILFILPSKSLEVVGSYIRYFTVFKDGIGLIDADNIDSKAEIDGVTWCYSKVMSIDLNRLLALNIAFEKSLLATATWFQYYTEDQGHFPLQHALRSIFSFHFLLCVSQKMKLCAIFDNLRYLIPSVTSLYSGYELLIEKFFERPFKSSLDVYLYSIIKSLLISLAQNNKVRFYSRVRLLGLTVDHSTVGASGVYPSLMSRVVYKHYRSLISEATTCFFLFEKGLHGNLPEEAKIHLETIEWARKFQEKEKQYGDILLKEGYTIESVINGEVDVEQQLFCQEVSELSAQELNKYLQAKSQVLCANIMNKHWDKPYFSQTRNISLKGMSGALQEDGHLAASVTLIEAIRFLNRSQTNPNVIDMYEQTKQSKAQARIVRKYQRTEADRGFFITTLPTRVRLEIIEDYFDAIAKVVPEEYISYGGDKKVLNIQNALEKALRWASGVSEITTSTGKSIKFKRKLMYVSADATKWSPGDNSAKFRRFTQAIYDGLSDNKLKCCVVDALRNIYETEFFMSRKLHRYIDSMENHSDAVEDFLAFFSNGVSANVKGNWLQGNLNKCSSLFGAAVSLLFREVWKQLFPELECFFEFAHHSDDALFIYGYLEPEDDGTDWFLYVSQQIQAGNFHWHAINQEMWKSMFNLHEHLLLMGSIKVSPKKTTVSPTNAEFLSTFFEGCAVSIPFVKILLGSLSDLPGLGFFDDLAAAQSRCVKSLDLGACPQLAQLAIVLCTSKVERLYGTADGMVNSPTAFLKVNKAHVPVPLGGDGSMSIMELATAGFGMADKNILKNAFISYKHTRRDGDRYVLGLFKFLMSLSEDVFQHDRLGEFSFVGKVQWKVFTPKAEFEFHDQFSHNYLLEWTRQHPVYDYIIPRNRDNLLVYLVRKLNDPSIITAMTMQSPLQLRFRMQAKQHMKVCRYEGEWVTFREVLAAADSFATSYQPTERDMDLFNTLVSCTFSKEYAWKDFLNEVRCEVLTTRHVHRPKIARTFTVREKDQAIQNPINSVIGYKYALTVDEVSDVLDSAFFPESLSADLQVMKDGVYRELGLDISSPEVLKRIAPLLYKAGRSRVVIVEGNVEGTAESICSYWLKTMSLIKTIRVRPKKEVLKAMSLYSVKENIGLQDDIAATRLCIEIWRWCKANEQDVKEWLTSLYFEKQTLMDWVERFRRKGVVPIDPEIQCIGLLLYDVLGYKSVLQMQANRRAYSGKQYDAYCVQTYNEETKLYEGDLRVTFNFGLDCARLEVFWDKKEYILETSITQRHVLRLLMEEVSQELIRCGMRFKTEQVNQTRSLVLFKTEAGFEWGKPNVPCIVYKHCVLRTGLRTKQPINKEFMINVQSDGFRAIAQMDIESPRFLLAHAYHTLRDIRYQAVQAVGNVWFKTEQHKLFINPIISSGLLENFMKGLPAAIPPAAYSLIMNKAKISVDLFMFNELLALINRNNILNLDGIEETSEGYSTVTSMSSKQWSEEMSLMSDDDIDDMEDFTIALDDIDFEQINLEEDIQHFLQDESAYVGDLLIQTEDIEVKKIRGVTRVLEPVKLLKSWVSKGLAIDKVYNPIGIILMARYMSKTYNFSSTPLALLNPYDLTELESVVKGWGETVNDRFKDLDIEAQTVVKEKGVQPEDVLPDSLFSFRHVDVLLRRLFPRDPVSTFY.

The Mn(2+) site is built by histidine 36, glutamate 54, aspartate 97, glutamate 110, and valine 111. Residue lysine 124 is the For endonuclease activity of the active site. In terms of domain architecture, RdRp catalytic spans 957-1143; sequence TGKSIKFKRK…AINQEMWKSM (187 aa). Aspartate 1100 contacts Mg(2+).

This sequence belongs to the Bunyavirales RNA polymerase family. In terms of assembly, interacts with the viral nucleoprotein. The cofactor is Mn(2+). It depends on Mg(2+) as a cofactor.

The protein localises to the host cytoplasm. It localises to the host perinuclear region. It carries out the reaction RNA(n) + a ribonucleoside 5'-triphosphate = RNA(n+1) + diphosphate. Functionally, RNA-dependent RNA polymerase, which is responsible for the replication and transcription of the viral RNA genome using antigenomic RNA as an intermediate. During transcription, synthesizes subgenomic RNAs and assures their capping by a cap-snatching mechanism, which involves the endonuclease activity cleaving the host capped pre-mRNAs. These short capped RNAs are then used as primers for viral transcription. Cleaves ssRNA substrates but not DNA. Seems to downregulate the expression of its own and heterologous mRNAs through its endonuclease activity. This Abrothrix longipilis (Long-haired grass mouse) protein is RNA-directed RNA polymerase L.